The following is a 142-amino-acid chain: Large ribosomal subunit protein uL13 (142 aa).

It belongs to the universal ribosomal protein uL13 family. As to quaternary structure, part of the 50S ribosomal subunit.

This protein is one of the early assembly proteins of the 50S ribosomal subunit, although it is not seen to bind rRNA by itself. It is important during the early stages of 50S assembly. In Psychrobacter cryohalolentis (strain ATCC BAA-1226 / DSM 17306 / VKM B-2378 / K5), this protein is Large ribosomal subunit protein uL13.